Consider the following 141-residue polypeptide: Cystatin (141 aa).

An N-terminal signal peptide occupies residues 1-26; sequence MVHSQLPVAAPLRLLCALLLLPSATM. Residues 29 to 129 form the Cystatin domain; it reads GGLYPRSVTD…CHFQVWSRPW (101 aa). Positions 73-77 match the Secondary area of contact motif; the sequence is QVVTG. Disulfide bonds link Cys-91-Cys-107 and Cys-120-Cys-140.

This sequence belongs to the cystatin family. In terms of tissue distribution, expressed by the venom gland at an extremely low level (at protein level).

It localises to the secreted. In terms of biological role, inhibits various C1 cysteine proteases including cathepsin L, papain and cathepsin B. This protein has no toxic activity and its function in the venom is unknown. It may play a role as a housekeeping or regulatory protein. The sequence is that of Cystatin from Tropidechis carinatus (Australian rough-scaled snake).